Reading from the N-terminus, the 919-residue chain is Plasma membrane ATPase 1 (919 aa).

The segment covering 1 to 16 (MADNAGEYHDAEKHAP) has biased composition (basic and acidic residues). The disordered stretch occupies residues 1-73 (MADNAGEYHD…APAAGEAKAV (73 aa)). Over 1-113 (MADNAGEYHD…KEELENPFLK (113 aa)) the chain is Cytoplasmic. The span at 34–63 (QDDEPDDDIDALIEELFSEDVQEEQEDNDD) shows a compositional bias: acidic residues. Ser89 carries the post-translational modification Phosphoserine. A helical transmembrane segment spans residues 114-134 (FIMFFVGPIQFVMEMAAALAA). Topologically, residues 135–138 (GLRD) are extracellular. Residues 139-158 (WVDFGVICALLMLNAVVGFV) traverse the membrane as a helical segment. Residues 159 to 289 (QEYQAGSIVD…GTGHFTEVLN (131 aa)) lie on the Cytoplasmic side of the membrane. Residues 290-311 (GIGTILLVLVLLTLFCIYTAAF) traverse the membrane as a helical segment. The Extracellular segment spans residues 312–322 (YRSVRLARLLE). Residues 323 to 345 (YTLAITIIGVPVGLPAVVTTTMA) form a helical membrane-spanning segment. The Cytoplasmic portion of the chain corresponds to 346-717 (VGAAYLAEKQ…LIIRNQLLNL (372 aa)). Catalysis depends on Asp376, which acts as the 4-aspartylphosphate intermediate. Residue Ser494 is modified to Phosphoserine. Mg(2+) is bound by residues Asp632 and Asp636. Residues 718–736 (ELVVFIAIFADVATLAIAY) form a helical membrane-spanning segment. At 737-752 (DNAPYSMKPVKWNLPR) the chain is on the extracellular side. Residues 753–772 (LWGLSTVIGIVLAIGTWITN) traverse the membrane as a helical segment. The Cytoplasmic portion of the chain corresponds to 773 to 824 (TTMIAQGQNRGIVQNFGVQDEVLFLEISLTENWLIFVTRCNGPFWSSIPSWQ). Residues 825–845 (LSGAVLAVDILATMFCIFGWF) form a helical membrane-spanning segment. Residues 846-858 (KGGHQTSIVAVLR) lie on the Extracellular side of the membrane. A helical membrane pass occupies residues 859–875 (IWMYSFGIFCIMAGTYY). Residues 876-919 (ILSESAGFDRMMNGKPKESRNQRSIEDLVVALQRTSTRHEKGDA) lie on the Cytoplasmic side of the membrane. Ser899 carries the phosphoserine modification.

Belongs to the cation transport ATPase (P-type) (TC 3.A.3) family. Type IIIA subfamily.

Its subcellular location is the cell membrane. It catalyses the reaction ATP + H2O + H(+)(in) = ADP + phosphate + 2 H(+)(out). In terms of biological role, the plasma membrane ATPase of plants and fungi is a hydrogen ion pump. The proton gradient it generates drives the active transport of nutrients by H(+)-symport. The resulting external acidification and/or internal alkinization may mediate growth responses. The chain is Plasma membrane ATPase 1 (pma1) from Schizosaccharomyces pombe (strain 972 / ATCC 24843) (Fission yeast).